Consider the following 882-residue polypeptide: DNA mismatch repair protein MutS (882 aa).

656–663 (GPNASGKS) lines the ATP pocket.

It belongs to the DNA mismatch repair MutS family.

Its function is as follows. This protein is involved in the repair of mismatches in DNA. It is possible that it carries out the mismatch recognition step. This protein has a weak ATPase activity. The polypeptide is DNA mismatch repair protein MutS (Synechococcus elongatus (strain ATCC 33912 / PCC 7942 / FACHB-805) (Anacystis nidulans R2)).